Consider the following 213-residue polypeptide: Kiwellin (213 aa).

An N-terminal signal peptide occupies residues 1 to 24 (MAQLSLLVLSLFLTLISLPPPGAS). 3 cysteine pairs are disulfide-bonded: C28–C60, C32–C44, and C38–C49. A 4-hydroxyproline mark is found at P65 and P67. 4 disulfide bridges follow: C72–C90, C80–C172, C119–C144, and C166–C182. Residues 91 to 121 (SPPVTSSTPAKLTNNDFSEGGDGGGPSECDE) form a disordered region. Residues 93–107 (PVTSSTPAKLTNNDF) show a composition bias toward polar residues.

The protein belongs to the kiwellin family. In terms of processing, undergoes proteolytic cleavage by actinidin to produce kissper and KiTH. Three forms of KiTH are produced by cleavage at different sites.

It is found in the secreted. Kissper is an anion-selective pore-forming peptide. This chain is Kiwellin, found in Actinidia chinensis var. chinensis (Chinese soft-hair kiwi).